The following is a 160-amino-acid chain: Putative pre-16S rRNA nuclease (160 aa).

It belongs to the YqgF nuclease family.

It localises to the cytoplasm. Its function is as follows. Could be a nuclease involved in processing of the 5'-end of pre-16S rRNA. This chain is Putative pre-16S rRNA nuclease, found in Cereibacter sphaeroides (strain ATCC 17025 / ATH 2.4.3) (Rhodobacter sphaeroides).